Consider the following 347-residue polypeptide: Protein YIPF1 homolog (347 aa).

The tract at residues 1-115 (MSNYNNKHHD…FSDNVPLNTN (115 aa)) is disordered. The Cytoplasmic portion of the chain corresponds to 1–166 (MSNYNNKHHD…FFNLIRENPD (166 aa)). The segment covering 34-47 (NLFPNTNIDYNDYT) has biased composition (polar residues). 2 stretches are compositionally biased toward low complexity: residues 48-67 (QNRG…LQFQ) and 76-104 (NSNT…SSNN). Positions 105-115 (KFSDNVPLNTN) are enriched in polar residues. The chain crosses the membrane as a helical span at residues 167–187 (LYGPFWVLTSLVFIVAVTSNL). Residues 188–207 (NEYFHSSDHKSWEVDIQKIV) lie on the Lumenal side of the membrane. A helical transmembrane segment spans residues 208–228 (YSAITIYGYSFVIPLILWGIF). The Cytoplasmic portion of the chain corresponds to 229–232 (KWMN). The helical transmembrane segment at 233–253 (LGLRLLDMLCIYGYTLFIFVP) threads the bilayer. Residues 254–255 (AS) lie on the Lumenal side of the membrane. A helical transmembrane segment spans residues 256-276 (ILCVIPLQLVQWIIVAIASIV). The Cytoplasmic segment spans residues 277-296 (SGLFLVTNIFTPLKEDFTKR). The helical transmembrane segment at 297-317 (GLIICAVIGALHIGLALVLKL) threads the bilayer. Residues 318–347 (YFFANSTENFTISDSSSTPTPTPTNTTKLL) are Lumenal-facing. 3 N-linked (GlcNAc...) asparagine glycosylation sites follow: Asn-322, Asn-326, and Asn-342.

It belongs to the YIP1 family.

It is found in the golgi apparatus. Its subcellular location is the cis-Golgi network membrane. The protein resides in the trans-Golgi network membrane. The protein localises to the late endosome membrane. The polypeptide is Protein YIPF1 homolog (yipf1) (Dictyostelium discoideum (Social amoeba)).